Here is a 105-residue protein sequence, read N- to C-terminus: uncharacterized protein (105 aa).

The helical transmembrane segment at 41-62 (GIITKIAASPFVIVLYFNTAFF) threads the bilayer.

Its subcellular location is the membrane. This is an uncharacterized protein from Saccharomyces cerevisiae (strain ATCC 204508 / S288c) (Baker's yeast).